Here is a 337-residue protein sequence, read N- to C-terminus: tRNA N6-adenosine threonylcarbamoyltransferase (337 aa).

Positions 111 and 115 each coordinate Fe cation. Substrate contacts are provided by residues 134–138, D167, G180, and N272; that span reads LVSGG. Fe cation is bound at residue D300.

The protein belongs to the KAE1 / TsaD family. Fe(2+) serves as cofactor.

The protein localises to the cytoplasm. It carries out the reaction L-threonylcarbamoyladenylate + adenosine(37) in tRNA = N(6)-L-threonylcarbamoyladenosine(37) in tRNA + AMP + H(+). Required for the formation of a threonylcarbamoyl group on adenosine at position 37 (t(6)A37) in tRNAs that read codons beginning with adenine. Is involved in the transfer of the threonylcarbamoyl moiety of threonylcarbamoyl-AMP (TC-AMP) to the N6 group of A37, together with TsaE and TsaB. TsaD likely plays a direct catalytic role in this reaction. This is tRNA N6-adenosine threonylcarbamoyltransferase from Escherichia coli O127:H6 (strain E2348/69 / EPEC).